Consider the following 934-residue polypeptide: 2-oxoglutarate dehydrogenase E1 component (934 aa).

It belongs to the alpha-ketoglutarate dehydrogenase family. Homodimer. Part of the 2-oxoglutarate dehydrogenase (OGDH) complex composed of E1 (2-oxoglutarate dehydrogenase), E2 (dihydrolipoamide succinyltransferase) and E3 (dihydrolipoamide dehydrogenase); the complex contains multiple copies of the three enzymatic components (E1, E2 and E3). The cofactor is thiamine diphosphate.

It carries out the reaction N(6)-[(R)-lipoyl]-L-lysyl-[protein] + 2-oxoglutarate + H(+) = N(6)-[(R)-S(8)-succinyldihydrolipoyl]-L-lysyl-[protein] + CO2. E1 component of the 2-oxoglutarate dehydrogenase (OGDH) complex which catalyzes the decarboxylation of 2-oxoglutarate, the first step in the conversion of 2-oxoglutarate to succinyl-CoA and CO(2). The sequence is that of 2-oxoglutarate dehydrogenase E1 component (sucA) from Coxiella burnetii (strain RSA 493 / Nine Mile phase I).